Reading from the N-terminus, the 474-residue chain is Fumarate hydratase class II (474 aa).

Substrate is bound by residues 104-106 (SGT), 128-131 (HPND), 138-140 (SSN), and threonine 186. Histidine 187 functions as the Proton donor/acceptor in the catalytic mechanism. The active site involves serine 318. Substrate is bound by residues serine 319 and 324–326 (KVN).

This sequence belongs to the class-II fumarase/aspartase family. Fumarase subfamily. Homotetramer.

It is found in the cytoplasm. The enzyme catalyses (S)-malate = fumarate + H2O. It functions in the pathway carbohydrate metabolism; tricarboxylic acid cycle; (S)-malate from fumarate: step 1/1. Functionally, involved in the TCA cycle. Catalyzes the stereospecific interconversion of fumarate to L-malate. This is Fumarate hydratase class II from Mycobacterium bovis (strain ATCC BAA-935 / AF2122/97).